The following is a 112-amino-acid chain: Large ribosomal subunit protein eL33y (112 aa).

It belongs to the eukaryotic ribosomal protein eL33 family.

The polypeptide is Large ribosomal subunit protein eL33y (RPL35AC) (Arabidopsis thaliana (Mouse-ear cress)).